A 443-amino-acid chain; its full sequence is Xaa-Pro dipeptidase (443 aa).

Mn(2+) contacts are provided by Asp244, Asp255, His336, Glu381, and Glu420.

Belongs to the peptidase M24B family. Bacterial-type prolidase subfamily. It depends on Mn(2+) as a cofactor.

It carries out the reaction Xaa-L-Pro dipeptide + H2O = an L-alpha-amino acid + L-proline. Functionally, splits dipeptides with a prolyl residue in the C-terminal position. The sequence is that of Xaa-Pro dipeptidase from Stenotrophomonas maltophilia (strain K279a).